Consider the following 181-residue polypeptide: MKQLLDFLPLVIFFAVYKFFDIYIASGALIAATALQLVISYLLYKKLEKMHLITFVMVTVFGSLTLILHDDSFIKWKVTIVYALFAIALGVSQIMNKPLLKSMLGKELIVEDKIWARVTWYWVSFFVVCGLVNIYVAFSLSQETWVNFKVFGLTALTLINTVLTVVYLFKNMSEEDRKELK.

5 helical membrane passes run 10-30 (LVIF…GALI), 50-70 (MHLI…ILHD), 72-92 (SFIK…LGVS), 118-138 (VTWY…YVAF), and 148-168 (FKVF…VVYL).

It belongs to the YciB family.

It localises to the cell inner membrane. Its function is as follows. Plays a role in cell envelope biogenesis, maintenance of cell envelope integrity and membrane homeostasis. This is Inner membrane-spanning protein YciB from Shewanella pealeana (strain ATCC 700345 / ANG-SQ1).